The primary structure comprises 137 residues: Small ribosomal subunit protein uS12 (137 aa).

The segment at 1 to 24 (MPTINQLVRKGRRSQSSKSKAPAL) is disordered. Residue aspartate 102 is modified to 3-methylthioaspartic acid.

It belongs to the universal ribosomal protein uS12 family. As to quaternary structure, part of the 30S ribosomal subunit. Contacts proteins S8 and S17. May interact with IF1 in the 30S initiation complex.

Functionally, with S4 and S5 plays an important role in translational accuracy. Its function is as follows. Interacts with and stabilizes bases of the 16S rRNA that are involved in tRNA selection in the A site and with the mRNA backbone. Located at the interface of the 30S and 50S subunits, it traverses the body of the 30S subunit contacting proteins on the other side and probably holding the rRNA structure together. The combined cluster of proteins S8, S12 and S17 appears to hold together the shoulder and platform of the 30S subunit. In Pediococcus pentosaceus (strain ATCC 25745 / CCUG 21536 / LMG 10740 / 183-1w), this protein is Small ribosomal subunit protein uS12.